The chain runs to 102 residues: Large ribosomal subunit protein bL21 (102 aa).

Belongs to the bacterial ribosomal protein bL21 family. Part of the 50S ribosomal subunit. Contacts protein L20.

Its function is as follows. This protein binds to 23S rRNA in the presence of protein L20. This is Large ribosomal subunit protein bL21 from Exiguobacterium sibiricum (strain DSM 17290 / CCUG 55495 / CIP 109462 / JCM 13490 / 255-15).